The following is a 204-amino-acid chain: Large ribosomal subunit protein eL15 (204 aa).

Belongs to the eukaryotic ribosomal protein eL15 family. In terms of assembly, component of the large ribosomal subunit.

It localises to the cytoplasm. Its function is as follows. Component of the large ribosomal subunit. The ribosome is a large ribonucleoprotein complex responsible for the synthesis of proteins in the cell. The protein is Large ribosomal subunit protein eL15 (rpl15) of Cyprinus carpio (Common carp).